The primary structure comprises 469 residues: Uronate isomerase (469 aa).

The protein belongs to the metallo-dependent hydrolases superfamily. Uronate isomerase family.

It catalyses the reaction D-glucuronate = D-fructuronate. It carries out the reaction aldehydo-D-galacturonate = keto-D-tagaturonate. It participates in carbohydrate metabolism; pentose and glucuronate interconversion. This chain is Uronate isomerase, found in Pectobacterium carotovorum subsp. carotovorum (strain PC1).